Reading from the N-terminus, the 177-residue chain is ATP synthase subunit delta (177 aa).

Belongs to the ATPase delta chain family. In terms of assembly, F-type ATPases have 2 components, F(1) - the catalytic core - and F(0) - the membrane proton channel. F(1) has five subunits: alpha(3), beta(3), gamma(1), delta(1), epsilon(1). F(0) has three main subunits: a(1), b(2) and c(10-14). The alpha and beta chains form an alternating ring which encloses part of the gamma chain. F(1) is attached to F(0) by a central stalk formed by the gamma and epsilon chains, while a peripheral stalk is formed by the delta and b chains.

It is found in the cell inner membrane. Functionally, f(1)F(0) ATP synthase produces ATP from ADP in the presence of a proton or sodium gradient. F-type ATPases consist of two structural domains, F(1) containing the extramembraneous catalytic core and F(0) containing the membrane proton channel, linked together by a central stalk and a peripheral stalk. During catalysis, ATP synthesis in the catalytic domain of F(1) is coupled via a rotary mechanism of the central stalk subunits to proton translocation. This protein is part of the stalk that links CF(0) to CF(1). It either transmits conformational changes from CF(0) to CF(1) or is implicated in proton conduction. The sequence is that of ATP synthase subunit delta from Neisseria gonorrhoeae (strain ATCC 700825 / FA 1090).